A 496-amino-acid polypeptide reads, in one-letter code: Lysosomal Pro-X carboxypeptidase (496 aa).

The signal sequence occupies residues 1 to 21 (MGRRALLLLLLSFLAPWTTIA). The propeptide occupies 22–45 (LRPALRALGSLHLPTNPTSLPAVA). Asn-47 and Asn-101 each carry an N-linked (GlcNAc...) asparagine glycan. Ser-179 functions as the Charge relay system in the catalytic mechanism. Residues 194 to 334 (HMVVGALAAS…QNIFQALNVY (141 aa)) form an SKS domain region. 4 cysteine pairs are disulfide-bonded: Cys-215/Cys-372, Cys-233/Cys-310, Cys-264/Cys-343, and Cys-364/Cys-394. Residues Asn-317, Asn-336, and Asn-345 are each glycosylated (N-linked (GlcNAc...) asparagine). Asn-415 is a glycosylation site (N-linked (GlcNAc...) asparagine). Active-site charge relay system residues include Asp-430 and His-455.

The protein belongs to the peptidase S28 family. In terms of assembly, homodimer.

Its subcellular location is the lysosome. It carries out the reaction Cleavage of a -Pro-|-Xaa bond to release a C-terminal amino acid.. Cleaves C-terminal amino acids linked to proline in peptides such as angiotensin II, III and des-Arg9-bradykinin. This cleavage occurs at acidic pH, but enzymatic activity is retained with some substrates at neutral pH. In Pongo abelii (Sumatran orangutan), this protein is Lysosomal Pro-X carboxypeptidase (PRCP).